Reading from the N-terminus, the 265-residue chain is ClpXP adapter protein SpxH (265 aa).

Belongs to the SpxH family. As to quaternary structure, interacts with Spx.

It localises to the cytoplasm. Its function is as follows. Adapter protein required for efficient degradation of Spx by ClpXP under non-stress conditions. Interaction with Spx stabilizes Spx and exposes the C-terminus of Spx for recognition and proteolysis by ClpXP. This Staphylococcus epidermidis (strain ATCC 35984 / DSM 28319 / BCRC 17069 / CCUG 31568 / BM 3577 / RP62A) protein is ClpXP adapter protein SpxH.